We begin with the raw amino-acid sequence, 305 residues long: Dihydroorotate dehydrogenase B (NAD(+)), catalytic subunit (305 aa).

Residues serine 23 and 47 to 48 (KG) contribute to the FMN site. Substrate contacts are provided by residues lysine 47 and 71–75 (NAIGL). Positions 101 and 129 each coordinate FMN. Asparagine 129 is a substrate binding site. The active-site Nucleophile is the cysteine 132. FMN contacts are provided by lysine 167 and isoleucine 193. A substrate-binding site is contributed by 194 to 195 (NT). FMN-binding positions include glycine 219, 245 to 246 (GG), and 267 to 268 (GT).

This sequence belongs to the dihydroorotate dehydrogenase family. Type 1 subfamily. As to quaternary structure, heterotetramer of 2 PyrK and 2 PyrD type B subunits. The cofactor is FMN.

The protein localises to the cytoplasm. The enzyme catalyses (S)-dihydroorotate + NAD(+) = orotate + NADH + H(+). Its pathway is pyrimidine metabolism; UMP biosynthesis via de novo pathway; orotate from (S)-dihydroorotate (NAD(+) route): step 1/1. In terms of biological role, catalyzes the conversion of dihydroorotate to orotate with NAD(+) as electron acceptor. The sequence is that of Dihydroorotate dehydrogenase B (NAD(+)), catalytic subunit (pyrD) from Geobacter sp. (strain M21).